Reading from the N-terminus, the 320-residue chain is Cytochrome f (320 aa).

An N-terminal signal peptide occupies residues 1–35 (MENRKTFSWLKEQMIRSISVSIMIYVITRTSISNA). Heme-binding residues include tyrosine 36, cysteine 56, cysteine 59, and histidine 60. Residues 286-306 (VQGLLFFFASVILAQVFLVLK) form a helical membrane-spanning segment.

Belongs to the cytochrome f family. The 4 large subunits of the cytochrome b6-f complex are cytochrome b6, subunit IV (17 kDa polypeptide, petD), cytochrome f and the Rieske protein, while the 4 small subunits are PetG, PetL, PetM and PetN. The complex functions as a dimer. The cofactor is heme.

The protein localises to the plastid. It is found in the chloroplast thylakoid membrane. Its function is as follows. Component of the cytochrome b6-f complex, which mediates electron transfer between photosystem II (PSII) and photosystem I (PSI), cyclic electron flow around PSI, and state transitions. The polypeptide is Cytochrome f (Saccharum hybrid (Sugarcane)).